A 117-amino-acid chain; its full sequence is UPF0344 protein GK0697 (117 aa).

The next 4 helical transmembrane spans lie at 1–21 (MTHAHITSWLITIVLFFLAVS), 39–59 (LFYILTIVTGLLLLHSIASIS), 60–80 (ALYWLKALAGLWVIGAMEMVL), and 97–117 (VIALAVTLFLGLLLPLGFDLF).

It belongs to the UPF0344 family.

Its subcellular location is the cell membrane. This Geobacillus kaustophilus (strain HTA426) protein is UPF0344 protein GK0697.